Here is a 273-residue protein sequence, read N- to C-terminus: GDNF family receptor alpha-4 (273 aa).

N-linked (GlcNAc...) asparagine glycosylation occurs at asparagine 192. Asparagine 250 carries the GPI-anchor amidated asparagine lipid modification. Positions 251-273 (AGCCFLWVSSMSILTALALQALL) are cleaved as a propeptide — removed in mature form.

Belongs to the GDNFR family. As to quaternary structure, interacts with ARTN ligand and RET: forms a 2:2:2 ternary complex composed of ARTN ligand, GFRA3 and RET receptor. Interacts with SORL1. In terms of tissue distribution, weakly expressed in heart, brain and testis.

Its subcellular location is the cell membrane. It localises to the secreted. Receptor for persephin (PSPN), a growth factor that exhibits neurotrophic activity on mesencephalic dopaminergic and motor neurons. Acts by binding to its coreceptor, GFRA4, leading to autophosphorylation and activation of the RET receptor. May be important in C-cell development and, in the postnatal development of the adrenal medulla. This is GDNF family receptor alpha-4 (Gfra4) from Rattus norvegicus (Rat).